The primary structure comprises 1472 residues: Gag-Pol polyprotein (1472 aa).

A lipid anchor (N-myristoyl glycine; by host) is attached at glycine 2. Positions 16-22 match the Nuclear export signal motif; the sequence is FEKIRLR. The Nuclear localization signal signature appears at 26–32; sequence KKKYQIK. Disordered stretches follow at residues 115-135 and 215-234; these read EKAAKKKNETTAPPGGESRNY and DRTHRPPAGPLPAGQLRDPT. The residue at position 135 (tyrosine 135) is a Phosphotyrosine; by host. 2 CCHC-type zinc fingers span residues 390–407 and 411–428; these read LKCFNCGKFGHMQRECKA and IKCFKCGKIGHMAKDCKN. The tract at residues 454–500 is disordered; it reads HSWSGTNSPPNGNSLRSSKEAPPAVCREGTAPERGERTDKETEGERS. The span at 456-469 shows a compositional bias: polar residues; sequence WSGTNSPPNGNSLR. Residues 483 to 499 are compositionally biased toward basic and acidic residues; sequence TAPERGERTDKETEGER. One can recognise a Peptidase A2 domain in the interval 524 to 597; it reads VQALLDTGAD…TPINIIGRNI (74 aa). The active-site For protease activity; shared with dimeric partner is aspartate 529. Residues 653–843 enclose the Reverse transcriptase domain; that stretch reads EGKLSRIGGE…PPWEWMGYKL (191 aa). Residues aspartate 719, aspartate 794, and aspartate 795 each coordinate Mg(2+). An RT 'primer grip' region spans residues 836–844; the sequence is WEWMGYKLH. The Tryptophan repeat motif motif lies at 1007–1023; it reads WDMWWQDYWQVSWIPEW. Positions 1043–1166 constitute an RNase H type-1 domain; the sequence is IKGEDVYYVD…IDKLVSKGIR (124 aa). Positions 1052, 1087, 1107, and 1158 each coordinate Mg(2+). Residues 1172 to 1213 form an Integrase-type zinc finger; sequence DRIEEAQDDHAKYHNNWRSMVQEFGLPNIVAKEIVAACPKCQ. Zn(2+)-binding residues include histidine 1181, histidine 1185, cysteine 1209, and cysteine 1212. The Integrase catalytic domain occupies 1223–1373; it reads VDASIETWQM…SSAERLVNML (151 aa). 2 residues coordinate Mg(2+): aspartate 1233 and aspartate 1285. The integrase-type DNA-binding region spans 1392–1439; sequence FKVYYREGRDPVWKGPARLIWKGEGAVVIKEGEDIKVVPRRKAKIIKD. Positions 1440–1472 are disordered; it reads YGERKTMDSEGSMEGVREANKQMEGDSDLQDQE. The segment covering 1454–1463 has biased composition (basic and acidic residues); the sequence is GVREANKQME.

In terms of assembly, homotrimer. Interacts with gp41 (via C-terminus). As to quaternary structure, homodimer. The active site consists of two apposed aspartic acid residues. Heterodimer of p66 RT and p51 RT (RT p66/p51). Heterodimerization of RT is essential for DNA polymerase activity. Despite the sequence identities, p66 RT and p51 RT have distinct folding. In terms of assembly, homotetramer; may further associate as a homohexadecamer. The cofactor is Mg(2+). Specific enzymatic cleavages by the viral protease yield mature proteins. The protease is released by autocatalytic cleavage. The polyprotein is cleaved during and after budding, this process is termed maturation. Proteolytic cleavage of p66 RT removes the RNase H domain to yield the p51 RT subunit. In terms of processing, capsid protein p24 is phosphorylated.

Its subcellular location is the virion. It is found in the host nucleus. It localises to the host cytoplasm. The protein localises to the host cell membrane. The enzyme catalyses Specific for a P1 residue that is hydrophobic, and P1' variable, but often Pro.. It catalyses the reaction Endohydrolysis of RNA in RNA/DNA hybrids. Three different cleavage modes: 1. sequence-specific internal cleavage of RNA. Human immunodeficiency virus type 1 and Moloney murine leukemia virus enzymes prefer to cleave the RNA strand one nucleotide away from the RNA-DNA junction. 2. RNA 5'-end directed cleavage 13-19 nucleotides from the RNA end. 3. DNA 3'-end directed cleavage 15-20 nucleotides away from the primer terminus.. It carries out the reaction 3'-end directed exonucleolytic cleavage of viral RNA-DNA hybrid.. The catalysed reaction is DNA(n) + a 2'-deoxyribonucleoside 5'-triphosphate = DNA(n+1) + diphosphate. With respect to regulation, the viral protease is inhibited by many synthetic protease inhibitors (PIs), such as amprenavir, atazanavir, indinavir, loprinavir, nelfinavir, ritonavir and saquinavir. RT can be inhibited either by nucleoside RT inhibitors (NRTIs) or by non nucleoside RT inhibitors (NNRTIs). NRTIs act as chain terminators, whereas NNRTIs inhibit DNA polymerization by binding a small hydrophobic pocket near the RT active site and inducing an allosteric change in this region. Classical NRTIs are abacavir, adefovir (PMEA), didanosine (ddI), lamivudine (3TC), stavudine (d4T), tenofovir (PMPA), zalcitabine (ddC), and zidovudine (AZT). Classical NNRTIs are atevirdine (BHAP U-87201E), delavirdine, efavirenz (DMP-266), emivirine (I-EBU), and nevirapine (BI-RG-587). The tritherapies used as a basic effective treatment of AIDS associate two NRTIs and one NNRTI. Use of protease inhibitors in tritherapy regimens permit more ambitious therapeutic strategies. Its function is as follows. Gag-Pol polyprotein and Gag polyprotein may regulate their own translation, by the binding genomic RNA in the 5'-UTR. At low concentration, Gag-Pol and Gag would promote translation, whereas at high concentration, the polyproteins encapsidate genomic RNA and then shut off translation. Matrix protein p17 has two main functions: in infected cell, it targets Gag and Gag-pol polyproteins to the plasma membrane via a multipartite membrane-binding signal, that includes its myristointegration complex. The myristoylation signal and the NLS exert conflicting influences its subcellular localization. The key regulation of these motifs might be phosphorylation of a portion of MA molecules on the C-terminal tyrosine at the time of virus maturation, by virion-associated cellular tyrosine kinase. Implicated in the release from host cell mediated by Vpu. Functionally, capsid protein p24 forms the conical core that encapsulates the genomic RNA-nucleocapsid complex in the virion. The core is constituted by capsid protein hexamer subunits. The core is disassembled soon after virion entry. Interaction with host PPIA/CYPA protects the virus from restriction by host TRIM5-alpha and from an unknown antiviral activity in host cells. This capsid restriction by TRIM5 is one of the factors which restricts SIV to the simian species. In terms of biological role, nucleocapsid protein p7 encapsulates and protects viral dimeric unspliced (genomic) RNA. Binds these RNAs through its zinc fingers. Facilitates rearangement of nucleic acid secondary structure during retrotranscription of genomic RNA. This capability is referred to as nucleic acid chaperone activity. Its function is as follows. The aspartyl protease mediates proteolytic cleavages of Gag and Gag-Pol polyproteins during or shortly after the release of the virion from the plasma membrane. Cleavages take place as an ordered, step-wise cascade to yield mature proteins. This process is called maturation. Displays maximal activity during the budding process just prior to particle release from the cell. Also cleaves Nef and Vif, probably concomitantly with viral structural proteins on maturation of virus particles. Hydrolyzes host EIF4GI and PABP1 in order to shut off the capped cellular mRNA translation. The resulting inhibition of cellular protein synthesis serves to ensure maximal viral gene expression and to evade host immune response. Reverse transcriptase/ribonuclease H (RT) is a multifunctional enzyme that converts the viral dimeric RNA genome into dsDNA in the cytoplasm, shortly after virus entry into the cell. This enzyme displays a DNA polymerase activity that can copy either DNA or RNA templates, and a ribonuclease H (RNase H) activity that cleaves the RNA strand of RNA-DNA heteroduplexes in a partially processive 3' to 5' endonucleasic mode. Conversion of viral genomic RNA into dsDNA requires many steps. A tRNA binds to the primer-binding site (PBS) situated at the 5'-end of the viral RNA. RT uses the 3' end of the tRNA primer to perform a short round of RNA-dependent minus-strand DNA synthesis. The reading proceeds through the U5 region and ends after the repeated (R) region which is present at both ends of viral RNA. The portion of the RNA-DNA heteroduplex is digested by the RNase H, resulting in a ssDNA product attached to the tRNA primer. This ssDNA/tRNA hybridizes with the identical R region situated at the 3' end of viral RNA. This template exchange, known as minus-strand DNA strong stop transfer, can be either intra- or intermolecular. RT uses the 3' end of this newly synthesized short ssDNA to perform the RNA-dependent minus-strand DNA synthesis of the whole template. RNase H digests the RNA template except for two polypurine tracts (PPTs) situated at the 5'-end and near the center of the genome. It is not clear if both polymerase and RNase H activities are simultaneous. RNase H can probably proceed both in a polymerase-dependent (RNA cut into small fragments by the same RT performing DNA synthesis) and a polymerase-independent mode (cleavage of remaining RNA fragments by free RTs). Secondly, RT performs DNA-directed plus-strand DNA synthesis using the PPTs that have not been removed by RNase H as primers. PPTs and tRNA primers are then removed by RNase H. The 3' and 5' ssDNA PBS regions hybridize to form a circular dsDNA intermediate. Strand displacement synthesis by RT to the PBS and PPT ends produces a blunt ended, linear dsDNA copy of the viral genome that includes long terminal repeats (LTRs) at both ends. Functionally, integrase catalyzes viral DNA integration into the host chromosome, by performing a series of DNA cutting and joining reactions. This enzyme activity takes place after virion entry into a cell and reverse transcription of the RNA genome in dsDNA. The first step in the integration process is 3' processing. This step requires a complex comprising the viral genome, matrix protein, Vpr and integrase. This complex is called the pre-integration complex (PIC). The integrase protein removes 2 nucleotides from each 3' end of the viral DNA, leaving recessed CA OH's at the 3' ends. In the second step, the PIC enters cell nucleus. This process is mediated through integrase and Vpr proteins, and allows the virus to infect a non dividing cell. This ability to enter the nucleus is specific of lentiviruses, other retroviruses cannot and rely on cell division to access cell chromosomes. In the third step, termed strand transfer, the integrase protein joins the previously processed 3' ends to the 5' ends of strands of target cellular DNA at the site of integration. The 5'-ends are produced by integrase-catalyzed staggered cuts, 5 bp apart. A Y-shaped, gapped, recombination intermediate results, with the 5'-ends of the viral DNA strands and the 3' ends of target DNA strands remaining unjoined, flanking a gap of 5 bp. The last step is viral DNA integration into host chromosome. This involves host DNA repair synthesis in which the 5 bp gaps between the unjoined strands are filled in and then ligated. Since this process occurs at both cuts flanking the SIV genome, a 5 bp duplication of host DNA is produced at the ends of SIV integration. Alternatively, Integrase may catalyze the excision of viral DNA just after strand transfer, this is termed disintegration. This is Gag-Pol polyprotein (gag-pol) from Simian immunodeficiency virus agm.grivet (isolate AGM gr-1) (SIV-agm.gri).